Reading from the N-terminus, the 418-residue chain is Putative ion-transport protein YfeO (418 aa).

Helical transmembrane passes span 10-30 (LLLS…LIVV), 54-74 (DSPL…GLVI), 99-119 (ALPG…SLGP), 120-140 (EHPI…RLLP), 149-169 (ILAS…AALI), 186-206 (LFAP…FFHP), 223-243 (ILSG…AVWC), 258-278 (VLVL…GGPV), 300-320 (DYFL…ASGF), 322-342 (GGRI…LHEH), 343-363 (VPAV…VLVV), and 371-391 (LFMA…CIVM).

This sequence belongs to the chloride channel (TC 2.A.49) family.

Its subcellular location is the cell membrane. The sequence is that of Putative ion-transport protein YfeO from Escherichia coli O8 (strain IAI1).